A 279-amino-acid polypeptide reads, in one-letter code: Large ribosomal subunit protein uL2 (279 aa).

The disordered stretch occupies residues 222–279 (GMAMNPVDHPMGGGEGKSKSGGGRRHPKSPWGQLAKGLKTRNKKKASQKLIVRGRNAK). Over residues 232 to 242 (MGGGEGKSKSG) the composition is skewed to gly residues. The span at 259–268 (LKTRNKKKAS) shows a compositional bias: basic residues.

It belongs to the universal ribosomal protein uL2 family. Part of the 50S ribosomal subunit. Forms a bridge to the 30S subunit in the 70S ribosome.

In terms of biological role, one of the primary rRNA binding proteins. Required for association of the 30S and 50S subunits to form the 70S ribosome, for tRNA binding and peptide bond formation. It has been suggested to have peptidyltransferase activity; this is somewhat controversial. Makes several contacts with the 16S rRNA in the 70S ribosome. The sequence is that of Large ribosomal subunit protein uL2 from Chlorobium phaeobacteroides (strain DSM 266 / SMG 266 / 2430).